A 373-amino-acid chain; its full sequence is Stationary phase protein 5 (373 aa).

Required for survival at high temperature during stationary phase. This Saccharomyces cerevisiae (strain ATCC 204508 / S288c) (Baker's yeast) protein is Stationary phase protein 5 (SPG5).